A 124-amino-acid chain; its full sequence is Putative ankyrin repeat protein RF_1087 (124 aa).

3 ANK repeats span residues 17–46 (NDQK…NPNI), 50–79 (NGET…IIDS), and 83–112 (FERT…TIGN).

This is Putative ankyrin repeat protein RF_1087 from Rickettsia felis (strain ATCC VR-1525 / URRWXCal2) (Rickettsia azadi).